Consider the following 299-residue polypeptide: Acetyl-coenzyme A carboxylase carboxyl transferase subunit beta (299 aa).

Residues 25–294 (VWTKCTSCEQ…PFVEPELIQE (270 aa)) form the CoA carboxyltransferase N-terminal domain. 4 residues coordinate Zn(2+): cysteine 29, cysteine 32, cysteine 48, and cysteine 51. Residues 29–51 (CTSCEQVLYRDELKRHLEVCPKC) form a C4-type zinc finger.

The protein belongs to the AccD/PCCB family. In terms of assembly, acetyl-CoA carboxylase is a heterohexamer composed of biotin carboxyl carrier protein (AccB), biotin carboxylase (AccC) and two subunits each of ACCase subunit alpha (AccA) and ACCase subunit beta (AccD). It depends on Zn(2+) as a cofactor.

It localises to the cytoplasm. The catalysed reaction is N(6)-carboxybiotinyl-L-lysyl-[protein] + acetyl-CoA = N(6)-biotinyl-L-lysyl-[protein] + malonyl-CoA. It participates in lipid metabolism; malonyl-CoA biosynthesis; malonyl-CoA from acetyl-CoA: step 1/1. In terms of biological role, component of the acetyl coenzyme A carboxylase (ACC) complex. Biotin carboxylase (BC) catalyzes the carboxylation of biotin on its carrier protein (BCCP) and then the CO(2) group is transferred by the transcarboxylase to acetyl-CoA to form malonyl-CoA. This is Acetyl-coenzyme A carboxylase carboxyl transferase subunit beta from Histophilus somni (strain 129Pt) (Haemophilus somnus).